A 304-amino-acid chain; its full sequence is Transmembrane protein 178A (304 aa).

Residues 1-25 (MESRGLVTAVSLTLSICSLLLLVTA) form the signal peptide. At 26 to 186 (IFTDHWYETD…LLHLRRITAG (161 aa)) the chain is on the extracellular side. An N-linked (GlcNAc...) asparagine glycan is attached at Asn165. Residues 187 to 207 (FLGMAAAVLLCGCIVAAISFF) form a helical membrane-spanning segment. At 208–215 (WEESLTQH) the chain is on the cytoplasmic side. A helical transmembrane segment spans residues 216-236 (VAGLLFLMTGIFCTISLCTYA). Over 237–267 (ASVAYELNRQPKFIYGLPSDVEHGYSWSLFC) the chain is Extracellular. Residues 268–288 (AWCSLGLIVAAGCLCTAYPFI) form a helical membrane-spanning segment. Over 289 to 304 (SRTKILHLKFARDSCV) the chain is Cytoplasmic.

This sequence belongs to the TMEM178 family.

It localises to the endoplasmic reticulum membrane. May act as a negative regulator of osteoclast differentiation. The sequence is that of Transmembrane protein 178A (tmem178a) from Xenopus laevis (African clawed frog).